The following is a 426-amino-acid chain: PHD finger-containing protein 6 (426 aa).

A PHD-type zinc finger spans residues 9–59 (RSICETCGHQGWKNSLVTCSKCRIACEHCYCMRESSFETSIHFVCADCSMR). Residues Cys-12, Cys-15, Cys-27, Cys-30, His-36, Cys-39, Cys-53, and Cys-56 each contribute to the Zn(2+) site. 2 disordered regions span residues 122–144 (TFRV…TAGF) and 185–205 (RQAS…GDGA).

As to quaternary structure, interacts directly with AIPP3/BDT1.

In terms of biological role, together with AIPP3/BDT1, cooperates to form a BAH-PHD bivalent histone reader complex able to read histone H3 lysine 27 trimethylation (H3K27me3) histone marks in order to regulate transcription, especially to prevent early flowering; promotes AIPP3/BDT1 binding to H3K27me3. This is PHD finger-containing protein 6 from Arabidopsis thaliana (Mouse-ear cress).